The following is a 355-amino-acid chain: 3-dehydroquinate synthase (355 aa).

NAD(+) contacts are provided by residues 71–76, 105–109, 129–130, lysine 142, and lysine 151; these read EGEERK, GVVGD, and TS. Zn(2+) is bound by residues glutamate 184, histidine 246, and histidine 263.

Belongs to the sugar phosphate cyclases superfamily. Dehydroquinate synthase family. Requires NAD(+) as cofactor. The cofactor is Co(2+). Zn(2+) serves as cofactor.

It is found in the cytoplasm. It carries out the reaction 7-phospho-2-dehydro-3-deoxy-D-arabino-heptonate = 3-dehydroquinate + phosphate. It participates in metabolic intermediate biosynthesis; chorismate biosynthesis; chorismate from D-erythrose 4-phosphate and phosphoenolpyruvate: step 2/7. In terms of biological role, catalyzes the conversion of 3-deoxy-D-arabino-heptulosonate 7-phosphate (DAHP) to dehydroquinate (DHQ). This is 3-dehydroquinate synthase from Streptococcus pneumoniae (strain ATCC BAA-255 / R6).